The following is a 368-amino-acid chain: Endoglucanase (368 aa).

An N-terminal signal peptide occupies residues 1-21 (MNVLRSGIVTMLLLAAFSVQA). Residue Glu-55 is the Proton donor of the active site. The Nucleophile role is filled by Asp-116.

The protein belongs to the glycosyl hydrolase 8 (cellulase D) family.

The protein resides in the secreted. It carries out the reaction Endohydrolysis of (1-&gt;4)-beta-D-glucosidic linkages in cellulose, lichenin and cereal beta-D-glucans.. Its pathway is glycan metabolism; bacterial cellulose biosynthesis. Functionally, hydrolyzes carboxymethylcellulose. This is Endoglucanase (bcsZ) from Escherichia coli (strain K12).